A 311-amino-acid polypeptide reads, in one-letter code: Ribosomal RNA small subunit methyltransferase H (311 aa).

S-adenosyl-L-methionine contacts are provided by residues 32–34 (AGH), aspartate 52, phenylalanine 79, aspartate 100, and glutamine 107.

The protein belongs to the methyltransferase superfamily. RsmH family.

It localises to the cytoplasm. It carries out the reaction cytidine(1402) in 16S rRNA + S-adenosyl-L-methionine = N(4)-methylcytidine(1402) in 16S rRNA + S-adenosyl-L-homocysteine + H(+). Its function is as follows. Specifically methylates the N4 position of cytidine in position 1402 (C1402) of 16S rRNA. The polypeptide is Ribosomal RNA small subunit methyltransferase H (Staphylococcus aureus (strain bovine RF122 / ET3-1)).